We begin with the raw amino-acid sequence, 764 residues long: ATP-dependent DNA helicase DDM1 (764 aa).

The interval 1 to 42 (MVSLRSRKVIPASEMVSDGKTEKDASGDSPTSVLNEEENCEE) is disordered. Basic and acidic residues predominate over residues 17-26 (SDGKTEKDAS). Residues 62–88 (LISEAMAQEEEQLLKLREDEEKANNAG) adopt a coiled-coil conformation. Residues 129-152 (IESESQKAEPEKTGRGRKRKAASQ) are disordered. A compositionally biased stretch (basic and acidic residues) spans 132 to 142 (ESQKAEPEKTG). Positions 145–152 (RKRKAASQ) match the Nuclear localization signal 1 motif. Positions 214-382 (ISLWQNGLNG…WSLLNFILPD (169 aa)) constitute a Helicase ATP-binding domain. 227 to 234 (DQMGLGKT) serves as a coordination point for ATP. A DEAH box motif is present at residues 333-336 (DEGH). A Nuclear localization signal 2 motif is present at residues 429–436 (LRRMKCDV). The Helicase C-terminal domain maps to 528-695 (LLERLLVRLF…STPLEEEDIL (168 aa)).

Belongs to the SNF2/RAD54 helicase family. As to quaternary structure, interacts with the MBD domains of MBD2, MBD5 and MBD6.

It is found in the nucleus. It catalyses the reaction ATP + H2O = ADP + phosphate + H(+). Its activity is regulated as follows. ATPase activity is stimulated 3-fold by DNA (both free and nucleosomal) binding. In terms of biological role, ATP-dependent DNA helicase that plays a role in formation, organization, stability and heritability of heterochromatin and thus regulates several physiological traits. Binds to the nucleosome and promotes chromatin remodeling in an ATP-dependent manner; induces nucleosome repositioning on a short DNA fragment, and, possibly, could be guided to target sites (including silent transposable elements) by small interfering RNAs (siRNAs). Can bind both free and nucleosomal DNA. Required for the heritable maintenance of genome integrity and transcriptional gene silencing (TGS), including homology-dependent gene silencing (HDG silencing), via the maintenance of DNA methylation (mostly on cytosine, in both CpG and CpHpG sites, where H is A, T or C) and of histone methylation (e.g. chromatin methylation). May facilitate localization of MBD proteins at specific nuclear domains. Necessary for the maintenance of the genomic imprint at the MEA locus, especially for the silencing of paternally inherited MEA locus. Plays a major role in the inactivation maintenance of retrotransposons (e.g. Tar17, SINE, LINE, ATLN39, CAC1 (CACTAs), Athila elements, and mutator-like elements MULEs and TIR-MULEs) and the silencing of repeated genes and transgenes (e.g. T-DNA insertions). Required for KYP-dependent histone H3 'Lys-9' (H3K9me) methylation, deacetylation of histone H4 'Lys-16' (H4K16) and MET1-dependent DNA methylation. Involved in the chromatin organization of 5S rRNA genes (localized in the pericentromeric heterochromatin of chromosomes 3, 4, and 5) modifications during heterochromatin establishment. Prevents siRNA accumulation (siRNA are probably involved in epigenetic inheritance and in 5S rRNA genes regulation by silencing). Required during plant organogenesis and development, as well as during seed formation. The polypeptide is ATP-dependent DNA helicase DDM1 (DDM1) (Arabidopsis thaliana (Mouse-ear cress)).